The primary structure comprises 373 residues: Glutamine synthetase (373 aa).

An N-acetylthreonine modification is found at threonine 2. The interval threonine 2–lysine 25 is required for glutamine-induced ubiquitination by CRL4(CRBN) and proteasomal degradation. An N6-acetyllysine; by EP300 mark is found at lysine 11 and lysine 14. Residues glutamate 24–arginine 106 enclose the GS beta-grasp domain. Residue tyrosine 104 is modified to Phosphotyrosine. One can recognise a GS catalytic domain in the interval leucine 113–asparagine 373. Glutamate 134 is a binding site for ATP. Residues glutamate 134, glutamate 136, glutamate 196, and glutamate 203 each coordinate Mn(2+). Glutamate 203–proline 208 serves as a coordination point for ATP. Asparagine 246 to tryptophan 247 provides a ligand contact to L-glutamate. Histidine 253 contacts Mn(2+). ATP-binding positions include asparagine 255–serine 257, arginine 319, and arginine 324. Arginine 319 is a binding site for L-glutamate. Residue tyrosine 336–glutamate 338 coordinates ADP. Residue glutamate 338 participates in Mn(2+) binding. Arginine 340 serves as a coordination point for L-glutamate. Position 343 is a phosphoserine (serine 343).

This sequence belongs to the glutamine synthetase family. As to quaternary structure, decamer; composed of two pentamers. Interacts with PALMD. Interacts with RHOJ. Interacts with BEST2; this interaction tethers a fraction of GLUL to the membrane, causing a decrease of cytosolic glutamine synthase (GS) activity and inhibits the chloride channel activity of BEST2 by affecting the gating at the aperture in the absence of intracellular glutamate. It depends on Mg(2+) as a cofactor. Requires Mn(2+) as cofactor. In terms of processing, acetylated by EP300/p300; acetylation is stimulated by increased glutamine levels and promotes ubiquitin-mediated proteasomal degradation. Post-translationally, palmitoylated; undergoes autopalmitoylation. Ubiquitinated by ZNRF1. Ubiquitinated by the DCX (DDB1-CUL4-X-box) E3 ubiquitin-protein ligase complex called CRL4(CRBN), leading to proteasomal degradation. Expressed in endothelial cells.

The protein resides in the cytoplasm. The protein localises to the cytosol. Its subcellular location is the microsome. It is found in the mitochondrion. It localises to the cell membrane. The enzyme catalyses L-glutamate + NH4(+) + ATP = L-glutamine + ADP + phosphate + H(+). It catalyses the reaction L-cysteinyl-[protein] + hexadecanoyl-CoA = S-hexadecanoyl-L-cysteinyl-[protein] + CoA. Glutamine synthetase activity is inhibited by methionine sulfoximine (MSO). Glutamine synthetase that catalyzes the ATP-dependent conversion of glutamate and ammonia to glutamine. Its role depends on tissue localization: in the brain, it regulates the levels of toxic ammonia and converts neurotoxic glutamate to harmless glutamine, whereas in the liver, it is one of the enzymes responsible for the removal of ammonia. Plays a key role in ammonium detoxification during erythropoiesis: the glutamine synthetase activity is required to remove ammonium generated by porphobilinogen deaminase (HMBS) during heme biosynthesis to prevent ammonium accumulation and oxidative stress. Essential for proliferation of fetal skin fibroblasts. Independently of its glutamine synthetase activity, required for endothelial cell migration during vascular development: acts by regulating membrane localization and activation of the GTPase RHOJ, possibly by promoting RHOJ palmitoylation. May act as a palmitoyltransferase for RHOJ: able to autopalmitoylate and then transfer the palmitoyl group to RHOJ. Plays a role in ribosomal 40S subunit biogenesis. Through the interaction with BEST2, inhibits BEST2 channel activity by affecting the gating at the aperture in the absence of intracellular L-glutamate, but sensitizes BEST2 to intracellular L-glutamate, which promotes the opening of BEST2 and thus relieves its inhibitory effect on BEST2. The chain is Glutamine synthetase from Homo sapiens (Human).